We begin with the raw amino-acid sequence, 454 residues long: Zinc finger CCCH domain-containing protein 66 (454 aa).

Gly residues predominate over residues 1 to 23 (MAAGAGAGGGGGEGDSNGGGTSP). Residues 1–30 (MAAGAGAGGGGGEGDSNGGGTSPGGVSAAA) are disordered. 5 C3H1-type zinc fingers span residues 66–94 (RIGEPDCSYYMRTGLCRFGMTCKFNHPPN), 111–139 (RVGQPECQYYLKTGTCKFGATCKFHHPRE), 157–185 (RPNEKECAYYLRTGQCKFASTCKFHHPQP), 318–346 (RPDQPECQFYMKTGDCKFGAVCKFHHPKE), and 364–392 (RPGEPVCTFYSRYGICKFGPNCKFDHPMG). Residues 405–454 (DVSSMHYQLSPSPGHPGILLDGGSGRSHRVPQSDSQQIPSGDGNAEREAS) form a disordered region. A compositionally biased stretch (polar residues) spans 434 to 443 (VPQSDSQQIP).

This is Zinc finger CCCH domain-containing protein 66 from Oryza sativa subsp. japonica (Rice).